The primary structure comprises 123 residues: uncharacterized protein (123 aa).

The disordered stretch occupies residues 17–74 (FQKKKKTGSQTRRTLKPQPQQLQQNLPKGHETTGHTYERVLQQQGSQERSPGLMSEDS). The residue at position 30 (Thr-30) is a Phosphothreonine. A compositionally biased stretch (low complexity) spans 32–43 (KPQPQQLQQNLP). Residues 44-54 (KGHETTGHTYE) show a composition bias toward basic and acidic residues. At Ser-62 the chain carries Phosphoserine.

This is an uncharacterized protein from Homo sapiens (Human).